A 191-amino-acid polypeptide reads, in one-letter code: Protein LIGHT-DEPENDENT SHORT HYPOCOTYLS 9 (191 aa).

Over residues 1–14 (MSSDRHTPTKDPPD) the composition is skewed to basic and acidic residues. 2 disordered regions span residues 1-41 (MSSD…YESQ) and 153-191 (QAKA…QSFT). The ALOG domain occupies 37–165 (RYESQKRRDW…ARGIPYRKKK (129 aa)). Residues 160–169 (PYRKKKRRKT) are compositionally biased toward basic residues. A Nuclear localization signal motif is present at residues 163-167 (KKKRR). The span at 181–191 (ANSSTPNQSFT) shows a compositional bias: polar residues.

The protein belongs to the plant homeotic and developmental regulators ALOG protein family.

It is found in the nucleus. In terms of biological role, probable transcription regulator that acts as a developmental regulator by promoting cell growth in response to light. This is Protein LIGHT-DEPENDENT SHORT HYPOCOTYLS 9 (LSH9) from Arabidopsis thaliana (Mouse-ear cress).